Reading from the N-terminus, the 246-residue chain is 2,3-bisphosphoglycerate-dependent phosphoglycerate mutase (246 aa).

Substrate-binding positions include 8-15 (RHGQSQWN), 21-22 (TG), Arg60, 87-90 (EKHY), Lys98, 114-115 (RR), and 183-184 (GN). Catalysis depends on His9, which acts as the Tele-phosphohistidine intermediate. The active-site Proton donor/acceptor is the Glu87.

The protein belongs to the phosphoglycerate mutase family. BPG-dependent PGAM subfamily. In terms of assembly, homodimer.

The catalysed reaction is (2R)-2-phosphoglycerate = (2R)-3-phosphoglycerate. It functions in the pathway carbohydrate degradation; glycolysis; pyruvate from D-glyceraldehyde 3-phosphate: step 3/5. Functionally, catalyzes the interconversion of 2-phosphoglycerate and 3-phosphoglycerate. This Dichelobacter nodosus (strain VCS1703A) protein is 2,3-bisphosphoglycerate-dependent phosphoglycerate mutase.